We begin with the raw amino-acid sequence, 113 residues long: Iron-sulfur cluster insertion protein ErpA (113 aa).

3 residues coordinate iron-sulfur cluster: Cys-41, Cys-105, and Cys-107.

The protein belongs to the HesB/IscA family. Homodimer. The cofactor is iron-sulfur cluster.

Its function is as follows. Required for insertion of 4Fe-4S clusters for at least IspG. The sequence is that of Iron-sulfur cluster insertion protein ErpA from Vibrio vulnificus (strain CMCP6).